The primary structure comprises 78 residues: MSNFEERVKKIIIEQLGVKEEEVKNEASFVDDLGADSLDTVELVMALEEEFDTDIPDDEAEKITTVQAAIDYVVSSAE.

The Carrier domain maps to 2–77 (SNFEERVKKI…AAIDYVVSSA (76 aa)). Residue serine 37 is modified to O-(pantetheine 4'-phosphoryl)serine.

This sequence belongs to the acyl carrier protein (ACP) family. In terms of processing, 4'-phosphopantetheine is transferred from CoA to a specific serine of apo-ACP by AcpS. This modification is essential for activity because fatty acids are bound in thioester linkage to the sulfhydryl of the prosthetic group.

It is found in the cytoplasm. Its pathway is lipid metabolism; fatty acid biosynthesis. Its function is as follows. Carrier of the growing fatty acid chain in fatty acid biosynthesis. Is probably involved in the biosynthesis of docosahexaenoic acid (DHA) which is produced by this bacterium as a fatty acyl component in its membrane lipid. The sequence is that of Acyl carrier protein from Moritella marina (Vibrio marinus).